A 501-amino-acid chain; its full sequence is L-lysine transport protein (501 aa).

A run of 13 helical transmembrane segments spans residues 25-41 (LIALIIGSTVGAGIFSI), 52-76 (GAMLIGWLIAGVGMLSVAFVFHVLA), 92-113 (VGLGDYVGFSSAWGYWLGSVIA), 138-155 (FVSALAVSALTWLVFGVV), 174-191 (ILPLLCFIILVAFLGFSW), 214-232 (GIMVYTVWVFIGIEGASVY), 247-269 (VIGFVAVLLLLVSISSLSFGVLT), 292-316 (WGAALISLGLCLSVLGAYVSWQMLC), 340-362 (GAAWMAQLISTIVIQIFIIIFFL), 377-393 (LYLVPYLFSAFYLVMLA), 424-440 (LIVGLVATVYSVWLFYA), 447-463 (LFGAMAMLPGLIPYVWT), and 477-495 (IGVVVVLVVAASAGVIGLV).

The protein belongs to the amino acid-polyamine-organocation (APC) superfamily. Basic amino acid/polyamine antiporter (APA) (TC 2.A.3.2) family.

The protein resides in the cell membrane. Functionally, permease that is involved in the transport across the membrane of lysine. The sequence is that of L-lysine transport protein (lysI) from Corynebacterium glutamicum (strain ATCC 13032 / DSM 20300 / JCM 1318 / BCRC 11384 / CCUG 27702 / LMG 3730 / NBRC 12168 / NCIMB 10025 / NRRL B-2784 / 534).